The sequence spans 344 residues: MKKAVILFNLGGPDKIENVEPFLFNLFNDPAILNLPTILRYPLAKLISNRRAPVAKKIYKELGGSSPILKLTMAQSKALETKLNQTEIDSEYKCFIVMRCWNPRANDVIKDVQSFNPEEIILMPLYPQYSAATSGSSIKEWRDVCKKNNYHVKTNTICCYPTDQNFINAHTKEIIKKIKDLKNFKLIFSAHGLPEKNIKKGDPYQWQVEQSVKKIVENLNIENLDWILSYQSRVGPLKWIGPSTEDIIVENSKLAKHIVLVPIAFVSEHSETLVELDIEYKEIADANGCKNYTRVPALGTNEDFIKAMSELIIKKNEYKFSENLYPPKIQCPSNFKKCPCLNYE.

Fe cation is bound by residues His-191 and Glu-271.

This sequence belongs to the ferrochelatase family.

The protein localises to the cytoplasm. The enzyme catalyses heme b + 2 H(+) = protoporphyrin IX + Fe(2+). Its pathway is porphyrin-containing compound metabolism; protoheme biosynthesis; protoheme from protoporphyrin-IX: step 1/1. Functionally, catalyzes the ferrous insertion into protoporphyrin IX. The sequence is that of Ferrochelatase from Pelagibacter ubique (strain HTCC1062).